A 469-amino-acid polypeptide reads, in one-letter code: Phosphoglucosamine mutase (469 aa).

Catalysis depends on S117, which acts as the Phosphoserine intermediate. Residues S117, D263, D265, and D267 each contribute to the Mg(2+) site. A Phosphoserine modification is found at S117.

This sequence belongs to the phosphohexose mutase family. Mg(2+) serves as cofactor. Activated by phosphorylation.

The catalysed reaction is alpha-D-glucosamine 1-phosphate = D-glucosamine 6-phosphate. Its function is as follows. Catalyzes the conversion of glucosamine-6-phosphate to glucosamine-1-phosphate. The chain is Phosphoglucosamine mutase from Anaeromyxobacter sp. (strain Fw109-5).